The chain runs to 211 residues: Adenylyl-sulfate kinase (211 aa).

32–39 (GLSASGKS) contributes to the ATP binding site. Ser-107 (phosphoserine intermediate) is an active-site residue.

This sequence belongs to the APS kinase family. As to quaternary structure, homodimer.

It catalyses the reaction adenosine 5'-phosphosulfate + ATP = 3'-phosphoadenylyl sulfate + ADP + H(+). Its pathway is sulfur metabolism; hydrogen sulfide biosynthesis; sulfite from sulfate: step 2/3. Functionally, catalyzes the synthesis of activated sulfate. The sequence is that of Adenylyl-sulfate kinase from Penicillium chrysogenum (Penicillium notatum).